A 275-amino-acid chain; its full sequence is Glucosamine-6-phosphate deaminase 2 (275 aa).

The active-site Proton acceptor; for enolization step is D72. A coiled-coil region spans residues 102–131 (NNAHILDGNASDLQAECEDFERKIKEAGGI). D141 functions as the For ring-opening step in the catalytic mechanism. Residue H143 is the Proton acceptor; for ring-opening step of the active site. Residue E148 is the For ring-opening step of the active site.

This sequence belongs to the glucosamine/galactosamine-6-phosphate isomerase family. As to quaternary structure, homohexamer.

The protein resides in the cytoplasm. The catalysed reaction is alpha-D-glucosamine 6-phosphate + H2O = beta-D-fructose 6-phosphate + NH4(+). Functionally, catalyzes the reversible conversion of alpha-D-glucosamine 6-phosphate (GlcN-6P) into beta-D-fructose 6-phosphate (Fru-6P) and ammonium ion, a regulatory reaction step in de novo uridine diphosphate-N-acetyl-alpha-D-glucosamine (UDP-GlcNAc) biosynthesis via hexosamine pathway. The chain is Glucosamine-6-phosphate deaminase 2 from Xenopus laevis (African clawed frog).